The sequence spans 219 residues: Probable GTP-binding protein EngB (219 aa).

The region spanning 24 to 207 (VQPEIAFAGR…HELIESWLRP (184 aa)) is the EngB-type G domain. Residues 32-39 (GRSNAGKS), 59-63 (GRTQH), 81-84 (DLPG), 148-151 (TKCD), and 186-188 (FSA) contribute to the GTP site. Residues S39 and T61 each coordinate Mg(2+).

Belongs to the TRAFAC class TrmE-Era-EngA-EngB-Septin-like GTPase superfamily. EngB GTPase family. It depends on Mg(2+) as a cofactor.

Its function is as follows. Necessary for normal cell division and for the maintenance of normal septation. In Burkholderia vietnamiensis (strain G4 / LMG 22486) (Burkholderia cepacia (strain R1808)), this protein is Probable GTP-binding protein EngB.